Here is a 309-residue protein sequence, read N- to C-terminus: MSQNVIRIATRKSPLALWQAEFVKAELEKFHEGLTVELLPMSTKGDIILDTPLAKVGGKGLFVKELEVAMLEDRADIAVHSMKDVPVDFPEGLGLEVICEREDPRDAFVSNNYKNISELPQGAVVGTSSLRRQCQIRASRPDLVIRDLRGNVGTRLGKLDAGNYDAIILAAAGLKRLKLEERITSFISAEESLPANGQGAVGIECRINDERVKALLAPLEHTETRHRVIAERAMNTHLEGGCQVPIGAYAEIQDDTLTLRGLVGNPDGSHIIEATKVGSKTDAQAIGVALAEELLSKGAKAILDAVYIK.

Cys242 bears the S-(dipyrrolylmethanemethyl)cysteine mark.

Belongs to the HMBS family. Monomer. Requires dipyrromethane as cofactor.

The catalysed reaction is 4 porphobilinogen + H2O = hydroxymethylbilane + 4 NH4(+). The protein operates within porphyrin-containing compound metabolism; protoporphyrin-IX biosynthesis; coproporphyrinogen-III from 5-aminolevulinate: step 2/4. Functionally, tetrapolymerization of the monopyrrole PBG into the hydroxymethylbilane pre-uroporphyrinogen in several discrete steps. This is Porphobilinogen deaminase from Shewanella sediminis (strain HAW-EB3).